The chain runs to 169 residues: Large ribosomal subunit protein uL10 (169 aa).

It belongs to the universal ribosomal protein uL10 family. Part of the ribosomal stalk of the 50S ribosomal subunit. The N-terminus interacts with L11 and the large rRNA to form the base of the stalk. The C-terminus forms an elongated spine to which L12 dimers bind in a sequential fashion forming a multimeric L10(L12)X complex.

Its function is as follows. Forms part of the ribosomal stalk, playing a central role in the interaction of the ribosome with GTP-bound translation factors. This Rickettsia bellii (strain OSU 85-389) protein is Large ribosomal subunit protein uL10.